Here is a 303-residue protein sequence, read N- to C-terminus: Bifunctional protein FolD (303 aa).

NADP(+)-binding positions include 168-170 (GRS), T197, and V238.

It belongs to the tetrahydrofolate dehydrogenase/cyclohydrolase family. Homodimer.

The catalysed reaction is (6R)-5,10-methylene-5,6,7,8-tetrahydrofolate + NADP(+) = (6R)-5,10-methenyltetrahydrofolate + NADPH. The enzyme catalyses (6R)-5,10-methenyltetrahydrofolate + H2O = (6R)-10-formyltetrahydrofolate + H(+). Its pathway is one-carbon metabolism; tetrahydrofolate interconversion. In terms of biological role, catalyzes the oxidation of 5,10-methylenetetrahydrofolate to 5,10-methenyltetrahydrofolate and then the hydrolysis of 5,10-methenyltetrahydrofolate to 10-formyltetrahydrofolate. This is Bifunctional protein FolD from Desulfosudis oleivorans (strain DSM 6200 / JCM 39069 / Hxd3) (Desulfococcus oleovorans).